We begin with the raw amino-acid sequence, 130 residues long: MATLRSFVLVDNGGTGNVTVVPVSNANGVAEWLSNNSRSQAYRVTASYRASGADKRKYAIKLEVPKIVTQVVNGVELPGSAWKAYASIDLTIPIFAATDDVTVISKSLAGLFKVGNPIAEAISSQSGFYA.

Residues 31-104 are viral RNA-binding; that stretch reads EWLSNNSRSQ…FAATDDVTVI (74 aa).

This sequence belongs to the Leviviricetes capsid protein family. Homodimer. The capsid proteins form dimers that assemble by group of 5. Twelve such pentamers are linked together with free dimers. The homodimers binds to the viral RNA via an operator hairpin, but also to many other RNA sequences in the viral genome; this interaction probably shifts the virus from the replicative to the assembly phase and ensures specific encapsidation of the viral genome.

Its subcellular location is the virion. Its function is as follows. Capsid protein self-assembles to form an icosahedral capsid with a T=3 symmetry, about 26 nm in diameter, and consisting of 89 capsid proteins dimers (178 capsid proteins). Involved in viral genome encapsidation through the interaction between a capsid protein dimer and the multiple packaging signals present in the RNA genome. The capsid also contains 1 copy of the A2 maturation protein. In terms of biological role, acts as a translational repressor of viral replicase synthesis late in infection. This latter function is the result of capsid protein interaction with an RNA hairpin which contains the replicase ribosome-binding site. The protein is Capsid protein of Escherichia coli (Bacteriophage GA).